The primary structure comprises 138 residues: Small ribosomal subunit protein uS12 (138 aa).

3-methylthioaspartic acid is present on Asp-89. Residues 107–138 are disordered; that stretch reads VSGRMQRRSKYGAKFPKTGTGKTKAVPTKNKK.

Belongs to the universal ribosomal protein uS12 family. In terms of assembly, part of the 30S ribosomal subunit. Contacts proteins S8 and S17. May interact with IF1 in the 30S initiation complex.

Its function is as follows. With S4 and S5 plays an important role in translational accuracy. Interacts with and stabilizes bases of the 16S rRNA that are involved in tRNA selection in the A site and with the mRNA backbone. Located at the interface of the 30S and 50S subunits, it traverses the body of the 30S subunit contacting proteins on the other side and probably holding the rRNA structure together. The combined cluster of proteins S8, S12 and S17 appears to hold together the shoulder and platform of the 30S subunit. In Azobacteroides pseudotrichonymphae genomovar. CFP2, this protein is Small ribosomal subunit protein uS12.